The sequence spans 59 residues: Alpha-conotoxin CIA (59 aa).

An N-terminal signal peptide occupies residues 1-16 (MFTVFLLVVLTITVVS). Residues 17–42 (FPSDRASDGRDDEAKDERSDMYKSKR) constitute a propeptide that is removed on maturation. Disulfide bonds link cysteine 46–cysteine 51 and cysteine 47–cysteine 57. At cysteine 57 the chain carries Cysteine amide.

This sequence belongs to the conotoxin A superfamily. Expressed by the venom duct.

The protein localises to the secreted. Alpha-conotoxins act on postsynaptic membranes, they bind to the nicotinic acetylcholine receptors (nAChR) and thus inhibit them. This toxin blocks the rat muscle nAChRs alpha-1-beta-1-gamma-delta (CHRNA1-CHRNB1-CHRNG-CHRND) (IC(50)=5.7 nM) and the rat neuronal nAChR alpha-3-beta-2/CHRNA3-CHRNB2 (IC(50)=2060 nM). In vivo, intramuscular injection into zebrafish produces rapid flaccid paralysis. The polypeptide is Alpha-conotoxin CIA (Conus catus (Cat cone)).